The sequence spans 271 residues: Protein PXR1 (271 aa).

In terms of domain architecture, G-patch spans 25–72 (TSRFGHQFLEKFGWKPGMGLGLSPMNSNTSHIKVSIKDDNVGLGAKLK). Positions 147-239 (SNAKKRKREG…SASNIPDAVN (93 aa)) are disordered. Residues 157–168 (DDSEDEDDDDKE) are compositionally biased toward acidic residues. Basic residues predominate over residues 175–203 (KKHKKHKKHKKDKKKDKKDKKEHKKHKKE). Over residues 204–221 (EKRLKKEKRAEKTKETKK) the composition is skewed to basic and acidic residues. Phosphoserine is present on Ser-230.

The protein belongs to the PINX1 family. As to quaternary structure, interacts with EST2.

The protein localises to the nucleus. It is found in the nucleolus. Functionally, involved in rRNA-processing at A0, A1 and A2 sites through its action in U18 and U24 snoRNA 3'-end final trimming. Negative regulator of telomerase through competition for binding to EST2 with TLC1. This Saccharomyces cerevisiae (strain ATCC 204508 / S288c) (Baker's yeast) protein is Protein PXR1 (PXR1).